A 317-amino-acid chain; its full sequence is Transaldolase (317 aa).

Lys126 (schiff-base intermediate with substrate) is an active-site residue.

Belongs to the transaldolase family. Type 1 subfamily. Homodimer.

Its subcellular location is the cytoplasm. It carries out the reaction D-sedoheptulose 7-phosphate + D-glyceraldehyde 3-phosphate = D-erythrose 4-phosphate + beta-D-fructose 6-phosphate. It functions in the pathway carbohydrate degradation; pentose phosphate pathway; D-glyceraldehyde 3-phosphate and beta-D-fructose 6-phosphate from D-ribose 5-phosphate and D-xylulose 5-phosphate (non-oxidative stage): step 2/3. Functionally, transaldolase is important for the balance of metabolites in the pentose-phosphate pathway. The polypeptide is Transaldolase (Burkholderia pseudomallei (strain 1710b)).